A 64-amino-acid chain; its full sequence is Prokaryotic ubiquitin-like protein Pup (64 aa).

A disordered region spans residues 1-37 (MAQEQTKRGGGGGEDDDLTGSTAAGQERREKLTDETD). An ARC ATPase binding region spans residues 21–58 (STAAGQERREKLTDETDDLLDEIDDVLEENAEDFVRAY). A coiled-coil region spans residues 23 to 52 (AAGQERREKLTDETDDLLDEIDDVLEENAE). Gln64 bears the Deamidated glutamine mark. Gln64 participates in a covalent cross-link: Isoglutamyl lysine isopeptide (Gln-Lys) (interchain with K-? in acceptor proteins).

Belongs to the prokaryotic ubiquitin-like protein family. In terms of assembly, strongly interacts with the proteasome-associated ATPase ARC through a hydrophobic interface; the interacting region of Pup lies in its C-terminal half. There is one Pup binding site per ARC hexamer ring. In terms of processing, is modified by deamidation of its C-terminal glutamine to glutamate by the deamidase Dop, a prerequisite to the subsequent pupylation process.

Its pathway is protein degradation; proteasomal Pup-dependent pathway. Functionally, protein modifier that is covalently attached to lysine residues of substrate proteins, thereby targeting them for proteasomal degradation. The tagging system is termed pupylation. This is Prokaryotic ubiquitin-like protein Pup from Mycolicibacterium vanbaalenii (strain DSM 7251 / JCM 13017 / BCRC 16820 / KCTC 9966 / NRRL B-24157 / PYR-1) (Mycobacterium vanbaalenii).